The primary structure comprises 392 residues: Tryptophan synthase beta chain (392 aa).

The residue at position 84 (Lys-84) is an N6-(pyridoxal phosphate)lysine.

Belongs to the TrpB family. As to quaternary structure, tetramer of two alpha and two beta chains. The cofactor is pyridoxal 5'-phosphate.

It carries out the reaction (1S,2R)-1-C-(indol-3-yl)glycerol 3-phosphate + L-serine = D-glyceraldehyde 3-phosphate + L-tryptophan + H2O. It functions in the pathway amino-acid biosynthesis; L-tryptophan biosynthesis; L-tryptophan from chorismate: step 5/5. Its function is as follows. The beta subunit is responsible for the synthesis of L-tryptophan from indole and L-serine. The sequence is that of Tryptophan synthase beta chain (trpB) from Chlamydia trachomatis serovar D (strain ATCC VR-885 / DSM 19411 / UW-3/Cx).